The following is a 412-amino-acid chain: MGICLSAQIKAVSPGASPKYMSSEANDSLGSKSSSVSIRTNPRTEGEILQSPNLKSFTFAELKAATRNFRPDSVLGEGGFGSVFKGWIDEQTLTASKPGTGVVIAVKKLNQDGWQGHQEWLAEVNYLGQFSHPNLVKLIGYCLEDEHRLLVYEFMPRGSLENHLFRRGSYFQPLSWTLRLKVALGAAKGLAFLHNAETSVIYRDFKTSNILLDSEYNAKLSDFGLAKDGPTGDKSHVSTRIMGTYGYAAPEYLATGHLTTKSDVYSYGVVLLEVLSGRRAVDKNRPPGEQKLVEWARPLLANKRKLFRVIDNRLQDQYSMEEACKVATLALRCLTFEIKLRPNMNEVVSHLEHIQTLNEAGGRNIDMVQRRMRRRSDSVAINQKPNAGFARQTAVGVIATAYPRPSDSPLFV.

A lipid anchor (N-myristoyl glycine) is attached at Gly-2. Cys-4 carries the S-palmitoyl cysteine lipid modification. A disordered region spans residues 15–45; sequence GASPKYMSSEANDSLGSKSSSVSIRTNPRTE. Polar residues predominate over residues 23–43; that stretch reads SEANDSLGSKSSSVSIRTNPR. Thr-58 is modified (phosphothreonine). Residues 69–356 enclose the Protein kinase domain; it reads FRPDSVLGEG…VVSHLEHIQT (288 aa). Residues 75–83 and Lys-107 each bind ATP; that span reads LGEGGFGSV. Tyr-152 carries the post-translational modification Phosphotyrosine. Residue Asp-204 is the Proton acceptor of the active site. A phosphoserine mark is found at Ser-208 and Ser-238. Thr-239 and Thr-244 each carry phosphothreonine. Tyr-252 carries the phosphotyrosine modification.

Belongs to the protein kinase superfamily. Ser/Thr protein kinase family. In terms of assembly, interacts with the Xanthomonas campestris effector XopAC/AvrAC. As to expression, expressed in stomatal guard cells of leaves.

Its subcellular location is the cell membrane. The catalysed reaction is L-seryl-[protein] + ATP = O-phospho-L-seryl-[protein] + ADP + H(+). It catalyses the reaction L-threonyl-[protein] + ATP = O-phospho-L-threonyl-[protein] + ADP + H(+). Functionally, possible bi-functional kinase. In vitro, it exhibits serine/threonine activity. In vivo, can phosphorylate tyrosine residues of limited substrates. May be involved in plant defense signaling. Required for full light-induced stomatal opening. The sequence is that of Probable serine/threonine-protein kinase PBL10 from Arabidopsis thaliana (Mouse-ear cress).